The primary structure comprises 342 residues: MSEESDSLRTSPSVASLSENELPPPPEPPGYVCSLTEDLVTKAREELQEKPEWRLRDVQALRDMVRKEYPNLSTSLDDAFLLRFLRARKFDYDRALQLLVNYHSCRRSWPEVFNNLKPSALKDVLASGFLTVLPHTDPRGCHVVCIRPDRWIPSNYPITENIRAIYLTLEKLIQSEETQVNGIVILADYKGVSLSKASHFGPFIAKKVIGILQDGFPIRIKAVHVVNEPRIFKGIFAIIKPFLKEKIANRFFLHGSDLNSLHTNLPRSILPKEYGGTAGELDTATWNAVLLASEDDFVKEFCQPVPACDSILGQTLLPEGLTSDAQCDDSLRAVKSQLYSCY.

The disordered stretch occupies residues 1–31 (MSEESDSLRTSPSVASLSENELPPPPEPPGY). Polar residues predominate over residues 8-19 (LRTSPSVASLSE). The region spanning 117 to 282 (KPSALKDVLA…EYGGTAGELD (166 aa)) is the CRAL-TRIO domain.

May act as a protein that binds a hydrophobic ligand. This Homo sapiens (Human) protein is Alpha-tocopherol transfer protein-like (TTPAL).